We begin with the raw amino-acid sequence, 131 residues long: UPF0344 protein Sca_0577 (131 aa).

Helical transmembrane passes span 1 to 21 (MLHLHIFSWVIGIILFIVSYI), 42 to 62 (LFLVLILFSGVWQVVEEFATA), 69 to 89 (LLTLKMICGIGVVALMEVTLV), and 99 to 119 (GLFWGTIALIIVTMALGIILP).

Belongs to the UPF0344 family.

It localises to the cell membrane. The sequence is that of UPF0344 protein Sca_0577 from Staphylococcus carnosus (strain TM300).